We begin with the raw amino-acid sequence, 224 residues long: MDQQSTLANTSTPSVWKTLFWQGVWKNNSTLVQLLGLCPLLAVSNSVTNALGLGIATLFVLICSNTVVSLFRKQIPHEIRIPIYVMIIATTVTVVQLLMNAYTYSLYQSLGIFIPLIVTNCIVIGRAEAFASKNPLSHAMFDGFAMGLGMCLSLVFLGAIREILGNGTLFDGIEHLLGDWAKGLRIELFHLDSHFLLAILPPGAFIGLGLILAIKNVIDQRNKA.

5 helical membrane passes run 51 to 71, 81 to 101, 105 to 125, 140 to 160, and 194 to 214; these read LGLGIATLFVLICSNTVVSLF, IPIYVMIIATTVTVVQLLMNA, SLYQSLGIFIPLIVTNCIVIG, MFDGFAMGLGMCLSLVFLGAI, and HFLLAILPPGAFIGLGLILAI.

It belongs to the NqrDE/RnfAE family. In terms of assembly, the complex is composed of six subunits: RnfA, RnfB, RnfC, RnfD, RnfE and RnfG.

It is found in the cell inner membrane. Part of a membrane-bound complex that couples electron transfer with translocation of ions across the membrane. This chain is Ion-translocating oxidoreductase complex subunit E, found in Pasteurella multocida (strain Pm70).